The following is a 209-amino-acid chain: Small ribosomal subunit protein uS4 (209 aa).

An S4 RNA-binding domain is found at 99 to 179 (GRLDSVAYRM…FPEWIEVDAK (81 aa)).

It belongs to the universal ribosomal protein uS4 family. In terms of assembly, part of the 30S ribosomal subunit. Contacts protein S5. The interaction surface between S4 and S5 is involved in control of translational fidelity.

Functionally, one of the primary rRNA binding proteins, it binds directly to 16S rRNA where it nucleates assembly of the body of the 30S subunit. Its function is as follows. With S5 and S12 plays an important role in translational accuracy. In Azoarcus sp. (strain BH72), this protein is Small ribosomal subunit protein uS4.